The chain runs to 634 residues: Extracellular metalloproteinase MEP (634 aa).

An N-terminal signal peptide occupies residues 1–18 (MRGLLLAGALALPASVFA). A propeptide spanning residues 19-245 (HPAHQSYGLN…IHGVVDYVAE (227 aa)) is cleaved from the precursor. His-429 contacts Zn(2+). Glu-430 is an active-site residue. His-433 is a binding site for Zn(2+).

The protein belongs to the peptidase M36 family. It depends on Zn(2+) as a cofactor.

Its subcellular location is the secreted. Its function is as follows. Secreted metalloproteinase that allows assimilation of proteinaceous substrates and probably acts as a virulence factor. This Neosartorya fischeri (strain ATCC 1020 / DSM 3700 / CBS 544.65 / FGSC A1164 / JCM 1740 / NRRL 181 / WB 181) (Aspergillus fischerianus) protein is Extracellular metalloproteinase MEP (MEP).